A 544-amino-acid polypeptide reads, in one-letter code: Cytochrome P450 2U1 (544 aa).

4 helical membrane passes run 30-50, 113-133, 261-281, and 342-362; these read LDPSGGALLLCGLVALLGWSW, VYGSIFSFFIGHYLVVVLSDF, ICLNSQVLLVNICPWLYYLPF, and LFYIIGDLFIAGTDTTTNSLL. Heme is bound at residue cysteine 490. A helical transmembrane segment spans residues 495–515; that stretch reads LAKMELFLMFVSLMQSFAFAL.

The protein belongs to the cytochrome P450 family. The cofactor is heme. As to expression, widely expressed with stronger expression in thymus, heart and cerebellum.

The protein localises to the endoplasmic reticulum membrane. Its subcellular location is the microsome membrane. It is found in the mitochondrion inner membrane. The catalysed reaction is an omega-methyl-long-chain fatty acid + reduced [NADPH--hemoprotein reductase] + O2 = an omega-hydroxy-long-chain fatty acid + oxidized [NADPH--hemoprotein reductase] + H2O + H(+). It catalyses the reaction (5Z,8Z,11Z,14Z)-eicosatetraenoate + reduced [NADPH--hemoprotein reductase] + O2 = 19-hydroxy-(5Z,8Z,11Z,14Z)-eicosatetraenoate + oxidized [NADPH--hemoprotein reductase] + H2O + H(+). It carries out the reaction (5Z,8Z,11Z,14Z)-eicosatetraenoate + reduced [NADPH--hemoprotein reductase] + O2 = 20-hydroxy-(5Z,8Z,11Z,14Z)-eicosatetraenoate + oxidized [NADPH--hemoprotein reductase] + H2O + H(+). The enzyme catalyses N-[(5Z,8Z,11Z,14Z)-eicosatetraenoyl]-serotonin + reduced [NADPH--hemoprotein reductase] + O2 = 2-oxo-N-[(5Z,8Z,11Z,14Z)-eicosatetraenoyl]-serotonin + oxidized [NADPH--hemoprotein reductase] + H2O + H(+). Its pathway is lipid metabolism; arachidonate metabolism. Its function is as follows. A cytochrome P450 monooxygenase involved in the metabolism of arachidonic acid and its conjugates. Mechanistically, uses molecular oxygen inserting one oxygen atom into a substrate, and reducing the second into a water molecule, with two electrons provided by NADPH via cytochrome P450 reductase (CPR; NADPH-ferrihemoprotein reductase). Acts as an omega and omega-1 hydroxylase for arachidonic acid and possibly for other long chain fatty acids. May modulate the arachidonic acid signaling pathway and play a role in other fatty acid signaling processes. May down-regulate the biological activities of N-arachidonoyl-serotonin, an endocannabinoid that has anti-nociceptive effects through inhibition of fatty acid amide hydrolase FAAH, TRPV1 receptor and T-type calcium channels. Catalyzes C-2 oxidation of the indole ring of N-arachidonoyl-serotonin forming a less active product 2-oxo-N-arachidonoyl-serotonin. This chain is Cytochrome P450 2U1, found in Homo sapiens (Human).